The sequence spans 458 residues: L-hydantoinase (458 aa).

The Zn(2+) site is built by histidine 60, histidine 62, lysine 147, histidine 183, histidine 239, and aspartate 312. Position 147 is an N6-carboxylysine (lysine 147).

Homotetramer. Zn(2+) is required as a cofactor. In terms of processing, carboxylation allows a single lysine to coordinate two zinc ions.

Rather more predominant for the cleavage of aryl- than for alkyl-hydantoin derivatives. The stereoselectivity of this enzyme depends on the substrate used for bioconversion: strictly L-selective for the cleavage of D,L-5-indolylmethylhydantoin, but D-selective for the hydrolysis of D,L-methylthioethylhydantoin. The polypeptide is L-hydantoinase (lhyD) (Paenarthrobacter aurescens (Arthrobacter aurescens)).